The primary structure comprises 233 residues: Beta-fibrinogenase brevinase (233 aa).

Positions 1–224 constitute a Peptidase S1 domain; sequence VIGGDECNIN…YIDWIQSIIA (224 aa). Cystine bridges form between Cys7/Cys138, Cys25/Cys41, Cys73/Cys231, Cys117/Cys185, Cys149/Cys164, and Cys175/Cys200. His40 (charge relay system) is an active-site residue. Asn54 is a glycosylation site (N-linked (GlcNAc...) asparagine). The active-site Charge relay system is Asp85. A glycan (N-linked (GlcNAc...) asparagine) is linked at Asn129. The short motif at 176–178 is the Cell attachment site element; that stretch reads RGD. Ser179 serves as the catalytic Charge relay system. N-linked (GlcNAc...) asparagine glycosylation is present at Asn226.

This sequence belongs to the peptidase S1 family. Snake venom subfamily. In terms of assembly, heterodimer of the brevinase A chain and the brevinase B chain. Expressed by the venom gland.

The protein resides in the secreted. With respect to regulation, the fibrinolytic activity is completely inhibited by PMSF, diisopropylfluorophosphate (DFP), pefabloc, dithiothreitol (DTT) and Zn(2+), but not by Pepstatin A, E64, iodoacetate, chymostatin, tosyl-Lphenylalanine chloromethyl ketone (TPCK), soybean trypsin inhibitor (SBTI), phosphoramidon, Ca(2+), Co(2+), Cu(2+), Fe(2+), Mg(2+), Mn(2+), K(+), and Na(+). Functionally, snake venom serine protease that has fibrinogenolytic activities. Preferentially cleaves the Bbeta-chain (FGB) and more slowly the Aa-chain (FGA) of fibrinogen, but does not affect the gamma-chain. Also has fibrinolytic activity. May play a role in antithrombotic reaction as well as thrombolytic reaction. The chain is Beta-fibrinogenase brevinase from Gloydius blomhoffii (Mamushi).